The following is a 76-amino-acid chain: Immune protein Tsi5 (76 aa).

2 consecutive transmembrane segments (helical) span residues 19–39 (LLMT…EWFF) and 43–63 (WVTV…LYLY).

It localises to the membrane. In terms of biological role, immunity protein that plays a role in preventing early activation of toxin Tse5. This chain is Immune protein Tsi5, found in Pseudomonas aeruginosa (strain ATCC 15692 / DSM 22644 / CIP 104116 / JCM 14847 / LMG 12228 / 1C / PRS 101 / PAO1).